Reading from the N-terminus, the 1096-residue chain is DNA-directed RNA polymerase subunit beta (1096 aa).

Residues 1070–1096 are disordered; that stretch reads LMQDVNPRRSTPSRPTYESLGSDYQED.

The protein belongs to the RNA polymerase beta chain family. In cyanobacteria the RNAP catalytic core is composed of 2 alpha, 1 beta, 1 beta', 1 gamma and 1 omega subunit. When a sigma factor is associated with the core the holoenzyme is formed, which can initiate transcription.

The enzyme catalyses RNA(n) + a ribonucleoside 5'-triphosphate = RNA(n+1) + diphosphate. Its function is as follows. DNA-dependent RNA polymerase catalyzes the transcription of DNA into RNA using the four ribonucleoside triphosphates as substrates. In Prochlorococcus marinus (strain MIT 9211), this protein is DNA-directed RNA polymerase subunit beta.